The following is a 434-amino-acid chain: Histidinol dehydrogenase (434 aa).

Residues Tyr-130, Gln-188, and Asn-211 each contribute to the NAD(+) site. 3 residues coordinate substrate: Ser-237, Gln-259, and His-262. Zn(2+)-binding residues include Gln-259 and His-262. Catalysis depends on proton acceptor residues Glu-326 and His-327. Substrate-binding residues include His-327, Asp-360, Glu-414, and His-419. Asp-360 contacts Zn(2+). Position 419 (His-419) interacts with Zn(2+).

The protein belongs to the histidinol dehydrogenase family. Homodimer. Zn(2+) serves as cofactor.

The enzyme catalyses L-histidinol + 2 NAD(+) + H2O = L-histidine + 2 NADH + 3 H(+). It functions in the pathway amino-acid biosynthesis; L-histidine biosynthesis; L-histidine from 5-phospho-alpha-D-ribose 1-diphosphate: step 9/9. Functionally, catalyzes the sequential NAD-dependent oxidations of L-histidinol to L-histidinaldehyde and then to L-histidine. This chain is Histidinol dehydrogenase, found in Shigella boydii serotype 4 (strain Sb227).